A 344-amino-acid chain; its full sequence is Uroporphyrinogen decarboxylase (344 aa).

Substrate is bound by residues 26–30, phenylalanine 45, aspartate 75, tyrosine 151, serine 206, and histidine 320; that span reads RQAGR.

Belongs to the uroporphyrinogen decarboxylase family. As to quaternary structure, homodimer.

It localises to the cytoplasm. It catalyses the reaction uroporphyrinogen III + 4 H(+) = coproporphyrinogen III + 4 CO2. The protein operates within porphyrin-containing compound metabolism; protoporphyrin-IX biosynthesis; coproporphyrinogen-III from 5-aminolevulinate: step 4/4. Its function is as follows. Catalyzes the decarboxylation of four acetate groups of uroporphyrinogen-III to yield coproporphyrinogen-III. The polypeptide is Uroporphyrinogen decarboxylase (Staphylococcus epidermidis (strain ATCC 35984 / DSM 28319 / BCRC 17069 / CCUG 31568 / BM 3577 / RP62A)).